A 546-amino-acid chain; its full sequence is Chaperonin GroEL (546 aa).

Residues 30-33, lysine 51, 87-91, glycine 415, 479-481, and aspartate 495 each bind ATP; these read TLGP, DGTTT, and NAA.

This sequence belongs to the chaperonin (HSP60) family. In terms of assembly, forms a cylinder of 14 subunits composed of two heptameric rings stacked back-to-back. Interacts with the co-chaperonin GroES.

It localises to the cytoplasm. The catalysed reaction is ATP + H2O + a folded polypeptide = ADP + phosphate + an unfolded polypeptide.. Functionally, together with its co-chaperonin GroES, plays an essential role in assisting protein folding. The GroEL-GroES system forms a nano-cage that allows encapsulation of the non-native substrate proteins and provides a physical environment optimized to promote and accelerate protein folding. The polypeptide is Chaperonin GroEL (Stutzerimonas stutzeri (strain A1501) (Pseudomonas stutzeri)).